A 101-amino-acid chain; its full sequence is Protein Tat (101 aa).

An interaction with human CREBBP region spans residues 1–24 (MEPVDPRLEPWKHPGSQPKTACTN). A transactivation region spans residues 1–48 (MEPVDPRLEPWKHPGSQPKTACTNCYCKKCCFHCQVCFITKGLGISYG). Residues cysteine 22, cysteine 25, and cysteine 27 each coordinate Zn(2+). Residues 22 to 37 (CTNCYCKKCCFHCQVC) form a cysteine-rich region. Residue lysine 28 is modified to N6-acetyllysine; by host PCAF. Zn(2+)-binding residues include cysteine 30, histidine 33, cysteine 34, and cysteine 37. The interval 38 to 48 (FITKGLGISYG) is core. A compositionally biased stretch (basic residues) spans 48–57 (GRKKRRQRRR). The disordered stretch occupies residues 48–101 (GRKKRRQRRRAPPDSEVHQVSLPKQPASQPQGDPTGPKESKKKVERETETDPVH). The Nuclear localization signal, RNA-binding (TAR), and protein transduction motif lies at 49 to 57 (RKKRRQRRR). The interaction with the host capping enzyme RNGTT stretch occupies residues 49-86 (RKKRRQRRRAPPDSEVHQVSLPKQPASQPQGDPTGPKE). An N6-acetyllysine; by host EP300 and GCN5L2 mark is found at lysine 50 and lysine 51. An asymmetric dimethylarginine; by host PRMT6 mark is found at arginine 52 and arginine 53. Residue lysine 71 forms a Glycyl lysine isopeptide (Lys-Gly) (interchain with G-Cter in ubiquitin) linkage. Residues 83-101 (GPKESKKKVERETETDPVH) show a composition bias toward basic and acidic residues.

This sequence belongs to the lentiviruses Tat family. Interacts with host CCNT1. Associates with the P-TEFb complex composed at least of Tat, P-TEFb (CDK9 and CCNT1), TAR RNA, RNA Pol II. Recruits the HATs CREBBP, TAF1/TFIID, EP300, PCAF and GCN5L2. Interacts with host KAT5/Tip60; this interaction targets the latter to degradation. Interacts with the host deacetylase SIRT1. Interacts with host capping enzyme RNGTT; this interaction stimulates RNGTT. Binds to host KDR, and to the host integrins ITGAV/ITGB3 and ITGA5/ITGB1. Interacts with host KPNB1/importin beta-1 without previous binding to KPNA1/importin alpha-1. Interacts with EIF2AK2. Interacts with host nucleosome assembly protein NAP1L1; this interaction may be required for the transport of Tat within the nucleus, since the two proteins interact at the nuclear rim. Interacts with host C1QBP/SF2P32; this interaction involves lysine-acetylated Tat. Interacts with the host chemokine receptors CCR2, CCR3 and CXCR4. Interacts with host DPP4/CD26; this interaction may trigger an anti-proliferative effect. Interacts with host LDLR. Interacts with the host extracellular matrix metalloproteinase MMP1. Interacts with host PRMT6; this interaction mediates Tat's methylation. Interacts with, and is ubiquitinated by MDM2/Hdm2. Interacts with host PSMC3 and HTATIP2. Interacts with STAB1; this interaction may overcome SATB1-mediated repression of IL2 and IL2RA (interleukin) in T cells by binding to the same domain than HDAC1. Interacts (when acetylated) with human CDK13, thereby increasing HIV-1 mRNA splicing and promoting the production of the doubly spliced HIV-1 protein Nef. Interacts with host TBP; this interaction modulates the activity of transcriptional pre-initiation complex. Interacts with host RELA. Interacts with host PLSCR1; this interaction negatively regulates Tat transactivation activity by altering its subcellular distribution. Post-translationally, asymmetrical arginine methylation by host PRMT6 seems to diminish the transactivation capacity of Tat and affects the interaction with host CCNT1. In terms of processing, acetylation by EP300, CREBBP, GCN5L2/GCN5 and PCAF regulates the transactivation activity of Tat. EP300-mediated acetylation of Lys-50 promotes dissociation of Tat from the TAR RNA through the competitive binding to PCAF's bromodomain. In addition, the non-acetylated Tat's N-terminus can also interact with PCAF. PCAF-mediated acetylation of Lys-28 enhances Tat's binding to CCNT1. Lys-50 is deacetylated by SIRT1. Polyubiquitination by host MDM2 does not target Tat to degradation, but activates its transactivation function and fosters interaction with CCNT1 and TAR RNA. Post-translationally, phosphorylated by EIF2AK2 on serine and threonine residues adjacent to the basic region important for TAR RNA binding and function. Phosphorylation of Tat by EIF2AK2 is dependent on the prior activation of EIF2AK2 by dsRNA.

It localises to the host nucleus. The protein resides in the host nucleolus. Its subcellular location is the host cytoplasm. It is found in the secreted. Its function is as follows. Transcriptional activator that increases RNA Pol II processivity, thereby increasing the level of full-length viral transcripts. Recognizes a hairpin structure at the 5'-LTR of the nascent viral mRNAs referred to as the transactivation responsive RNA element (TAR) and recruits the cyclin T1-CDK9 complex (P-TEFb complex) that will in turn hyperphosphorylate the RNA polymerase II to allow efficient elongation. The CDK9 component of P-TEFb and other Tat-activated kinases hyperphosphorylate the C-terminus of RNA Pol II that becomes stabilized and much more processive. Other factors such as HTATSF1/Tat-SF1, SUPT5H/SPT5, and HTATIP2 are also important for Tat's function. Besides its effect on RNA Pol II processivity, Tat induces chromatin remodeling of proviral genes by recruiting the histone acetyltransferases (HATs) CREBBP, EP300 and PCAF to the chromatin. This also contributes to the increase in proviral transcription rate, especially when the provirus integrates in transcriptionally silent region of the host genome. To ensure maximal activation of the LTR, Tat mediates nuclear translocation of NF-kappa-B by interacting with host RELA. Through its interaction with host TBP, Tat may also modulate transcription initiation. Tat can reactivate a latently infected cell by penetrating in it and transactivating its LTR promoter. In the cytoplasm, Tat is thought to act as a translational activator of HIV-1 mRNAs. Extracellular circulating Tat can be endocytosed by surrounding uninfected cells via the binding to several surface receptors such as CD26, CXCR4, heparan sulfate proteoglycans (HSPG) or LDLR. Neurons are rarely infected, but they internalize Tat via their LDLR. Through its interaction with nuclear HATs, Tat is potentially able to control the acetylation-dependent cellular gene expression. Modulates the expression of many cellular genes involved in cell survival, proliferation or in coding for cytokines or cytokine receptors. Tat plays a role in T-cell and neurons apoptosis. Tat induced neurotoxicity and apoptosis probably contribute to neuroAIDS. Circulating Tat also acts as a chemokine-like and/or growth factor-like molecule that binds to specific receptors on the surface of the cells, affecting many cellular pathways. In the vascular system, Tat binds to ITGAV/ITGB3 and ITGA5/ITGB1 integrins dimers at the surface of endothelial cells and competes with bFGF for heparin-binding sites, leading to an excess of soluble bFGF. This is Protein Tat from Human immunodeficiency virus type 1 group M subtype B (isolate SF162) (HIV-1).